Consider the following 241-residue polypeptide: Urease accessory protein UreF (241 aa).

This sequence belongs to the UreF family. UreD, UreF and UreG form a complex that acts as a GTP-hydrolysis-dependent molecular chaperone, activating the urease apoprotein by helping to assemble the nickel containing metallocenter of UreC. The UreE protein probably delivers the nickel.

It localises to the cytoplasm. In terms of biological role, required for maturation of urease via the functional incorporation of the urease nickel metallocenter. This Rhodopseudomonas palustris (strain BisB18) protein is Urease accessory protein UreF.